A 334-amino-acid polypeptide reads, in one-letter code: Aspartate carbamoyltransferase catalytic subunit (334 aa).

Positions 71 and 72 each coordinate carbamoyl phosphate. K99 provides a ligand contact to L-aspartate. Carbamoyl phosphate-binding residues include R121, H151, and Q154. The L-aspartate site is built by R184 and R239. Carbamoyl phosphate-binding residues include G280 and P281.

This sequence belongs to the aspartate/ornithine carbamoyltransferase superfamily. ATCase family. As to quaternary structure, heterododecamer (2C3:3R2) of six catalytic PyrB chains organized as two trimers (C3), and six regulatory PyrI chains organized as three dimers (R2).

The catalysed reaction is carbamoyl phosphate + L-aspartate = N-carbamoyl-L-aspartate + phosphate + H(+). Its pathway is pyrimidine metabolism; UMP biosynthesis via de novo pathway; (S)-dihydroorotate from bicarbonate: step 2/3. Functionally, catalyzes the condensation of carbamoyl phosphate and aspartate to form carbamoyl aspartate and inorganic phosphate, the committed step in the de novo pyrimidine nucleotide biosynthesis pathway. This Pseudomonas putida (Arthrobacter siderocapsulatus) protein is Aspartate carbamoyltransferase catalytic subunit.